Here is a 320-residue protein sequence, read N- to C-terminus: GTPase Era (320 aa).

The region spanning 25–193 (HCGFIAIVGR…RKHVRDHLPK (169 aa)) is the Era-type G domain. The interval 33-40 (GRPNVGKS) is G1. Residue 33–40 (GRPNVGKS) coordinates GTP. Residues 59–63 (QTTRH) are G2. Residues 80–83 (DTPG) are G3. GTP contacts are provided by residues 80 to 84 (DTPGL) and 142 to 145 (NKVD). The segment at 142-145 (NKVD) is G4. The tract at residues 172-174 (ISA) is G5. In terms of domain architecture, KH type-2 spans 216-302 (VREKLMRFTG…YLETWVKVKS (87 aa)).

The protein belongs to the TRAFAC class TrmE-Era-EngA-EngB-Septin-like GTPase superfamily. Era GTPase family. As to quaternary structure, monomer.

It localises to the cytoplasm. Its subcellular location is the cell inner membrane. Its function is as follows. An essential GTPase that binds both GDP and GTP, with rapid nucleotide exchange. Plays a role in 16S rRNA processing and 30S ribosomal subunit biogenesis and possibly also in cell cycle regulation and energy metabolism. The polypeptide is GTPase Era (Vibrio vulnificus (strain CMCP6)).